Reading from the N-terminus, the 261-residue chain is Glutamate 5-kinase (261 aa).

Lysine 7 provides a ligand contact to ATP. 3 residues coordinate substrate: serine 46, aspartate 131, and asparagine 147. Residues 167–168 and 209–215 each bind ATP; these read SD and TGGIVTK.

The protein belongs to the glutamate 5-kinase family.

It localises to the cytoplasm. The catalysed reaction is L-glutamate + ATP = L-glutamyl 5-phosphate + ADP. Its pathway is amino-acid biosynthesis; L-proline biosynthesis; L-glutamate 5-semialdehyde from L-glutamate: step 1/2. In terms of biological role, catalyzes the transfer of a phosphate group to glutamate to form L-glutamate 5-phosphate. This Wolinella succinogenes (strain ATCC 29543 / DSM 1740 / CCUG 13145 / JCM 31913 / LMG 7466 / NCTC 11488 / FDC 602W) (Vibrio succinogenes) protein is Glutamate 5-kinase.